The sequence spans 88 residues: uncharacterized protein (88 aa).

Positions 1–24 are cleaved as a signal peptide; sequence MLPRSCKDFYETLRTAVLCGQACA.

This sequence to Rhizobium NGR234A y4oL.

This is an uncharacterized protein from Sinorhizobium fredii (strain NBRC 101917 / NGR234).